Consider the following 87-residue polypeptide: Cell division topological specificity factor (87 aa).

Belongs to the MinE family.

In terms of biological role, prevents the cell division inhibition by proteins MinC and MinD at internal division sites while permitting inhibition at polar sites. This ensures cell division at the proper site by restricting the formation of a division septum at the midpoint of the long axis of the cell. The protein is Cell division topological specificity factor of Neisseria gonorrhoeae (strain ATCC 700825 / FA 1090).